A 1023-amino-acid polypeptide reads, in one-letter code: DNA polymerase (1023 aa).

The tract at residues 726 to 751 is disordered; the sequence is QTDATRKHRQCTPTSNSSSDEDAPFY.

It belongs to the DNA polymerase type-B family. Heterodimer with the terminal protein; this heterodimer binds to bp 9 to 18 of the genome. Forms a complex with viral pTP, DBP and hosts NFIA and POU2F1/OCT1 for initiation of replication.

It localises to the host nucleus. The catalysed reaction is DNA(n) + a 2'-deoxyribonucleoside 5'-triphosphate = DNA(n+1) + diphosphate. In terms of biological role, eukaryotic-type DNA polymerase involved in viral genomic replication. DNA synthesis is protein primed, and acts in a strand displacement replication. Assembles in complex with viral pTP, DBP, host NFIA and host POU2F1/OCT1 on viral origin of replication. The polymerase covalently transfers dCMP onto pTP, thereby initiating complementary strand synthesis. The chain is DNA polymerase from Bovine adenovirus B serotype 3 (BAdV-3).